The sequence spans 490 residues: Cytochrome P450 2C13, male-specific (490 aa).

Heme is bound at residue Cys-435.

This sequence belongs to the cytochrome P450 family. Requires heme as cofactor. In terms of tissue distribution, liver, and to a lesser extent in prostate, kidney, heart and brain.

It localises to the endoplasmic reticulum membrane. The protein resides in the microsome membrane. It catalyses the reaction an organic molecule + reduced [NADPH--hemoprotein reductase] + O2 = an alcohol + oxidized [NADPH--hemoprotein reductase] + H2O + H(+). Cytochromes P450 are a group of heme-thiolate monooxygenases. In liver microsomes, this enzyme is involved in an NADPH-dependent electron transport pathway. It oxidizes a variety of structurally unrelated compounds, including steroids, fatty acids, and xenobiotics. The chain is Cytochrome P450 2C13, male-specific (Cyp2c13) from Rattus norvegicus (Rat).